A 455-amino-acid polypeptide reads, in one-letter code: Zinc finger and BTB domain-containing protein 8A.2 (455 aa).

Positions 24 to 92 (CDCHIMIDGH…MYSGKLNLSG (69 aa)) constitute a BTB domain. 2 C2H2-type zinc fingers span residues 299 to 321 (FKCP…LLCH) and 327 to 350 (YPCQ…RTIH).

The protein localises to the nucleus. Functionally, may be involved in transcriptional regulation. This Xenopus tropicalis (Western clawed frog) protein is Zinc finger and BTB domain-containing protein 8A.2 (zbtb8a.2).